The primary structure comprises 87 residues: Small ribosomal subunit protein bS18 (87 aa).

Belongs to the bacterial ribosomal protein bS18 family. In terms of assembly, part of the 30S ribosomal subunit. Forms a tight heterodimer with protein bS6.

Binds as a heterodimer with protein bS6 to the central domain of the 16S rRNA, where it helps stabilize the platform of the 30S subunit. The chain is Small ribosomal subunit protein bS18 from Campylobacter hominis (strain ATCC BAA-381 / DSM 21671 / CCUG 45161 / LMG 19568 / NCTC 13146 / CH001A).